The following is a 316-amino-acid chain: Methionyl-tRNA formyltransferase (316 aa).

111-114 contributes to the (6S)-5,6,7,8-tetrahydrofolate binding site; it reads GLLP.

The protein belongs to the Fmt family.

It catalyses the reaction L-methionyl-tRNA(fMet) + (6R)-10-formyltetrahydrofolate = N-formyl-L-methionyl-tRNA(fMet) + (6S)-5,6,7,8-tetrahydrofolate + H(+). Attaches a formyl group to the free amino group of methionyl-tRNA(fMet). The formyl group appears to play a dual role in the initiator identity of N-formylmethionyl-tRNA by promoting its recognition by IF2 and preventing the misappropriation of this tRNA by the elongation apparatus. The sequence is that of Methionyl-tRNA formyltransferase from Chlamydia trachomatis serovar L2b (strain UCH-1/proctitis).